The chain runs to 375 residues: Probable serine/threonine-protein kinase PBL28 (375 aa).

Thr-65 is subject to Phosphothreonine. The 281-residue stretch at 76–356 (FSDENLLGKG…MDCVKELQLI (281 aa)) folds into the Protein kinase domain. Residues 82-90 (LGKGGFGRV) and Lys-104 each bind ATP. Tyr-152 bears the Phosphotyrosine mark. The active-site Proton acceptor is the Asp-205. Thr-245 is subject to Phosphothreonine. Phosphotyrosine is present on Tyr-253.

It belongs to the protein kinase superfamily. Ser/Thr protein kinase family.

It localises to the cell membrane. The catalysed reaction is L-seryl-[protein] + ATP = O-phospho-L-seryl-[protein] + ADP + H(+). The enzyme catalyses L-threonyl-[protein] + ATP = O-phospho-L-threonyl-[protein] + ADP + H(+). Functionally, may be involved in plant defense signaling. This chain is Probable serine/threonine-protein kinase PBL28, found in Arabidopsis thaliana (Mouse-ear cress).